Reading from the N-terminus, the 519-residue chain is MQLNPAEISELIKSRIEGLAASSDIRNQGTVVSVTDGIVRIHGLSEVMQGEMLEFPATKDGQPSYGLALNLERDSVGAVILGEYEHISEGDTVKCTGRILEVPVGPELVGRVVNALGQPIDGKGPINAKLTDVIEKVAPGVIARQSVDQPLQTGIKSIDAMVPVGRGQRELIIGDRQTGKTAVAIDAIIAQKGQGVTCIYVAIGQKASSIKNVVRALEQAGAMEYTIVVAASASESAAMQYVSAYSGCTMGEYFRDRGEDALIVYDDLSKQAVAYRQVSLLLRRPPGREAYPGDVFYLHSRLLERAARVNADYVEAFTKGEVKGKTGSLTALPIIETQAGDVSAFVPTNVISITDGQIFLETSLFNAGIRPAINAGISVSRVGGAAQTKLVKGLSGGIRTDLAQYRELAAFAQFASDLDEATRKQLDRGARVTELLKQPQYTPLPISLMGATLFAVNKGFMDDVDVKKVLAFESGLHQFLKTSHGALLERLEKNRAFDKEGKDEAELTQAITAFKKSFA.

174–181 (GDRQTGKT) contacts ATP.

This sequence belongs to the ATPase alpha/beta chains family. In terms of assembly, F-type ATPases have 2 components, CF(1) - the catalytic core - and CF(0) - the membrane proton channel. CF(1) has five subunits: alpha(3), beta(3), gamma(1), delta(1), epsilon(1). CF(0) has three main subunits: a(1), b(2) and c(9-12). The alpha and beta chains form an alternating ring which encloses part of the gamma chain. CF(1) is attached to CF(0) by a central stalk formed by the gamma and epsilon chains, while a peripheral stalk is formed by the delta and b chains.

The protein localises to the cell inner membrane. It catalyses the reaction ATP + H2O + 4 H(+)(in) = ADP + phosphate + 5 H(+)(out). In terms of biological role, produces ATP from ADP in the presence of a proton gradient across the membrane. The alpha chain is a regulatory subunit. In Paracidovorax citrulli (strain AAC00-1) (Acidovorax citrulli), this protein is ATP synthase subunit alpha.